Consider the following 132-residue polypeptide: Nuclear transition protein 2 (132 aa).

Over residues 1–20 (MDTKTQSLPNTHAQPHSNSR) the composition is skewed to polar residues. The tract at residues 1-132 (MDTKTQSLPN…KRQSSGRKYN (132 aa)) is disordered. His12, His16, His24, Cys29, Cys31, and Cys35 together coordinate Zn(2+). The span at 37-59 (SRSRSRSCRSRSSSRRPRSHRSP) shows a compositional bias: basic residues. Residues 82-94 (SHQCPSRPVTHSC) show a composition bias toward polar residues. The Nuclear localization signal signature appears at 105 to 113 (GKVIKRKQV). Residues 108 to 132 (IKRKQVKRSKQVYKRKRQSSGRKYN) show a composition bias toward basic residues. The residue at position 127 (Ser127) is a Phosphoserine.

Belongs to the nuclear transition protein 2 family. In terms of tissue distribution, testis.

The protein resides in the nucleus. It is found in the nucleolus. It localises to the chromosome. Its function is as follows. Plays a key role in the replacement of histones to protamine in the elongating spermatids of mammals. In condensing spermatids, loaded onto the nucleosomes, where it promotes the recruitment and processing of protamines, which are responsible for histone eviction. The polypeptide is Nuclear transition protein 2 (TNP2) (Bos taurus (Bovine)).